Reading from the N-terminus, the 106-residue chain is uncharacterized protein (106 aa).

This is an uncharacterized protein from Saccharomyces cerevisiae (strain ATCC 204508 / S288c) (Baker's yeast).